We begin with the raw amino-acid sequence, 142 residues long: Serine protease inhibitor (142 aa).

The residue at position 1 (Ser1) is an N-acetylserine.

Its function is as follows. Serine protease inhibitor. Active against beta-trypsin and alpha-chymotrypsin with dissociation constants of 0.35 nM and 40 nM respectively. Inhibits factor XIa, but not other enzymes involved in coagulation and fibrinolysis. Does not inhibit subtilisin, lysyl endopeptidase, arginyl endopeptidase or papain. In Lentinula edodes (Shiitake mushroom), this protein is Serine protease inhibitor.